Reading from the N-terminus, the 213-residue chain is NADH-quinone oxidoreductase subunit C (213 aa).

This sequence belongs to the complex I 30 kDa subunit family. NDH-1 is composed of 14 different subunits. Subunits NuoB, C, D, E, F, and G constitute the peripheral sector of the complex.

Its subcellular location is the cell inner membrane. The catalysed reaction is a quinone + NADH + 5 H(+)(in) = a quinol + NAD(+) + 4 H(+)(out). NDH-1 shuttles electrons from NADH, via FMN and iron-sulfur (Fe-S) centers, to quinones in the respiratory chain. The immediate electron acceptor for the enzyme in this species is believed to be ubiquinone. Couples the redox reaction to proton translocation (for every two electrons transferred, four hydrogen ions are translocated across the cytoplasmic membrane), and thus conserves the redox energy in a proton gradient. This Rhodospirillum rubrum (strain ATCC 11170 / ATH 1.1.1 / DSM 467 / LMG 4362 / NCIMB 8255 / S1) protein is NADH-quinone oxidoreductase subunit C.